The sequence spans 417 residues: NADH-quinone oxidoreductase subunit D (417 aa).

This sequence belongs to the complex I 49 kDa subunit family. NDH-1 is composed of 14 different subunits. Subunits NuoB, C, D, E, F, and G constitute the peripheral sector of the complex.

Its subcellular location is the cell inner membrane. It catalyses the reaction a quinone + NADH + 5 H(+)(in) = a quinol + NAD(+) + 4 H(+)(out). In terms of biological role, NDH-1 shuttles electrons from NADH, via FMN and iron-sulfur (Fe-S) centers, to quinones in the respiratory chain. The immediate electron acceptor for the enzyme in this species is believed to be ubiquinone. Couples the redox reaction to proton translocation (for every two electrons transferred, four hydrogen ions are translocated across the cytoplasmic membrane), and thus conserves the redox energy in a proton gradient. In Cupriavidus taiwanensis (strain DSM 17343 / BCRC 17206 / CCUG 44338 / CIP 107171 / LMG 19424 / R1) (Ralstonia taiwanensis (strain LMG 19424)), this protein is NADH-quinone oxidoreductase subunit D.